The sequence spans 360 residues: Phosphate acyltransferase (360 aa).

Residues 296–305 (STLRREHLDR) show a composition bias toward basic and acidic residues. The disordered stretch occupies residues 296 to 360 (STLRREHLDR…LRTAEPPGSL (65 aa)). The span at 314-333 (PRQRRRPRRQKRRAACRPRP) shows a compositional bias: basic residues. The segment covering 334–350 (RSAAGRAPGSGVRGAAG) has biased composition (low complexity).

The protein belongs to the PlsX family. As to quaternary structure, homodimer. Probably interacts with PlsY.

Its subcellular location is the cytoplasm. The enzyme catalyses a fatty acyl-[ACP] + phosphate = an acyl phosphate + holo-[ACP]. It functions in the pathway lipid metabolism; phospholipid metabolism. In terms of biological role, catalyzes the reversible formation of acyl-phosphate (acyl-PO(4)) from acyl-[acyl-carrier-protein] (acyl-ACP). This enzyme utilizes acyl-ACP as fatty acyl donor, but not acyl-CoA. The polypeptide is Phosphate acyltransferase (Deinococcus radiodurans (strain ATCC 13939 / DSM 20539 / JCM 16871 / CCUG 27074 / LMG 4051 / NBRC 15346 / NCIMB 9279 / VKM B-1422 / R1)).